The chain runs to 440 residues: Gamma-aminobutyric acid receptor subunit pi (440 aa).

The N-terminal stretch at 1–23 is a signal peptide; sequence MSYSLYLAFVCLNLLAQRMCIQG. The Extracellular segment spans residues 24 to 241; that stretch reads NQFNVEVSRS…LVLQFELRRN (218 aa). N-linked (GlcNAc...) asparagine glycans are attached at residues asparagine 43, asparagine 102, and asparagine 145. Cysteine 160 and cysteine 174 are disulfide-bonded. Residues asparagine 196 and asparagine 228 are each glycosylated (N-linked (GlcNAc...) asparagine). A helical transmembrane segment spans residues 242–262; it reads VLYFILETYVPSTFLVVLSWV. Residues 263–270 lie on the Cytoplasmic side of the membrane; sequence SFWISLES. The chain crosses the membrane as a helical span at residues 271 to 290; it reads VPARTCIGVTTVLSMTTLMI. The Extracellular segment spans residues 291–301; sequence GSRTSLPNTNC. Residues 302–322 traverse the membrane as a helical segment; it reads FIKAIDVYLGICFSFVFGALL. Over 323 to 419 the chain is Cytoplasmic; the sequence is EYAVAHYSSL…NPSNVDRYSK (97 aa). Residues 420-440 traverse the membrane as a helical segment; sequence LLFPLIFMLANVFYWAYYMYF.

It belongs to the ligand-gated ion channel (TC 1.A.9) family. Gamma-aminobutyric acid receptor (TC 1.A.9.5) subfamily. GABRP sub-subfamily. As to quaternary structure, heteropentamer, formed by a combination of alpha (GABRA1-6), beta (GABRB1-3), gamma (GABRG1-3), delta (GABRD), epsilon (GABRE), rho (GABRR1-3), pi (GABRP) and theta (GABRQ) chains, each subunit exhibiting distinct physiological and pharmacological properties. As to expression, expressed in lungs, in alveolar epithelium.

It localises to the cell membrane. Its subcellular location is the apical cell membrane. It catalyses the reaction chloride(in) = chloride(out). Its function is as follows. Pi subunit of the heteropentameric ligand-gated chloride channel gated by gamma-aminobutyric acid (GABA). GABA-gated chloride channels, also named GABA(A) receptors (GABAAR), consist of five subunits arranged around a central pore and contain GABA active binding site(s) located at the alpha and beta subunit interfaces. When activated by GABA, GABAARs selectively allow the flow of chloride anions across the cell membrane down their electrochemical gradient. Pi-containing GABAARs are mostly located in peripheral tissues. In the uterus, pi subunits modulate uterus contraction by altering the sensitivity of GABAARs to pregnanolone. In the lungs, pi-containing GABAARs contribute to pulmonary fluid transport via luminal secretion of chloride. The chain is Gamma-aminobutyric acid receptor subunit pi from Rattus norvegicus (Rat).